Here is a 278-residue protein sequence, read N- to C-terminus: Large ribosomal subunit protein uL24m (278 aa).

Residues 109–142 enclose the KOW domain; it reads FFPGDLVQVMVGKDKGRQGLVLTTSRDSSDVIVD.

It belongs to the universal ribosomal protein uL24 family.

The protein resides in the mitochondrion. This Caenorhabditis elegans protein is Large ribosomal subunit protein uL24m (mrpl-24).